A 234-amino-acid polypeptide reads, in one-letter code: Glycerol-3-phosphate acyltransferase (234 aa).

6 consecutive transmembrane segments (helical) span residues L4–G24, T56–F76, V90–A110, A122–L142, V152–F172, and F191–I211.

It belongs to the PlsY family. In terms of assembly, probably interacts with PlsX.

It localises to the cell inner membrane. It carries out the reaction an acyl phosphate + sn-glycerol 3-phosphate = a 1-acyl-sn-glycero-3-phosphate + phosphate. It functions in the pathway lipid metabolism; phospholipid metabolism. Functionally, catalyzes the transfer of an acyl group from acyl-phosphate (acyl-PO(4)) to glycerol-3-phosphate (G3P) to form lysophosphatidic acid (LPA). This enzyme utilizes acyl-phosphate as fatty acyl donor, but not acyl-CoA or acyl-ACP. This Chlorobium chlorochromatii (strain CaD3) protein is Glycerol-3-phosphate acyltransferase.